The chain runs to 763 residues: Phosphoglycerol transferase I (763 aa).

4 helical membrane-spanning segments follow: residues 1–21, 26–46, 77–97, and 108–128; these read MSEL…AWKA, WWFA…ITLY, ILPG…LGWI, and VGYS…SPAF.

It belongs to the OpgB family.

Its subcellular location is the cell inner membrane. It catalyses the reaction a phosphatidylglycerol + a membrane-derived-oligosaccharide D-glucose = a 1,2-diacyl-sn-glycerol + a membrane-derived-oligosaccharide 6-(glycerophospho)-D-glucose.. It participates in glycan metabolism; osmoregulated periplasmic glucan (OPG) biosynthesis. In terms of biological role, transfers a phosphoglycerol residue from phosphatidylglycerol to the membrane-bound nascent glucan backbones. This is Phosphoglycerol transferase I from Salmonella paratyphi B (strain ATCC BAA-1250 / SPB7).